The sequence spans 452 residues: Tripartite motif-containing protein 49 (452 aa).

The segment at 15-56 (CPLCMNYFIDPVTIDCGHSFCRPCFYLNWQDIPFLVQCSECT) adopts an RING-type zinc-finger fold. The segment at 88–129 (SEEQMCGTHRETKKIFCEVDRSLLCLLCSSSQEHRYHRHRPI) adopts a B box-type zinc-finger fold. Residues Cys93, His96, Cys115, and His121 each contribute to the Zn(2+) site. The B30.2/SPRY domain occupies 269–452 (ELSAGPITGL…LRPIFCCIHF (184 aa)).

It belongs to the TRIM/RBCC family. In terms of tissue distribution, preferentially expressed in testis.

The sequence is that of Tripartite motif-containing protein 49 (TRIM49) from Homo sapiens (Human).